The primary structure comprises 159 residues: Transcription elongation factor GreA (159 aa).

Positions T3–K37 form a coiled coil.

Belongs to the GreA/GreB family.

Its function is as follows. Necessary for efficient RNA polymerase transcription elongation past template-encoded arresting sites. The arresting sites in DNA have the property of trapping a certain fraction of elongating RNA polymerases that pass through, resulting in locked ternary complexes. Cleavage of the nascent transcript by cleavage factors such as GreA or GreB allows the resumption of elongation from the new 3'terminus. GreA releases sequences of 2 to 3 nucleotides. This is Transcription elongation factor GreA from Acetivibrio thermocellus (strain ATCC 27405 / DSM 1237 / JCM 9322 / NBRC 103400 / NCIMB 10682 / NRRL B-4536 / VPI 7372) (Clostridium thermocellum).